A 327-amino-acid polypeptide reads, in one-letter code: Zinc transport protein ZntB (327 aa).

At 1–271 the chain is on the cytoplasmic side; it reads MDVVEGKALQ…AMNRRTYTMS (271 aa). The helical transmembrane segment at 272-292 threads the bilayer; it reads LLAMVFLPTTFLTGLFGVNLG. The Periplasmic portion of the chain corresponds to 293-300; sequence GIPGNTDA. A helical transmembrane segment spans residues 301–321; that stretch reads FGFTIFCMMLVVLVLSVAWWL. Residues 322–327 are Cytoplasmic-facing; that stretch reads KRSKWL.

The protein belongs to the CorA metal ion transporter (MIT) (TC 1.A.35) family.

The protein resides in the cell inner membrane. The catalysed reaction is Zn(2+)(out) + H(+)(out) = Zn(2+)(in) + H(+)(in). Zinc transporter. Acts as a Zn(2+):proton symporter, which likely mediates zinc ion uptake. The polypeptide is Zinc transport protein ZntB (Yersinia pseudotuberculosis serotype O:1b (strain IP 31758)).